Here is a 454-residue protein sequence, read N- to C-terminus: MALNVVILAAGKGTRMRSDLPKVLHPIAHKSMVQHVIDTAHNVGSDAIQLVYGYGGEKLQSVLGEQQLNWVLQAEQLGTGHAVAQANSNIADDDTVLILYGDVPLIQASTLEALLAAREENGLAILTVNLPNPTGYGRIVREANKVVGIIEQKDANAEQLAINEINTGIMAAPGKQLKAWLGQLSSNNAQGEYYLTDIVAMAHRDGVAITTAQPDSAIEVEGANNRVQLAQLERAYQARAAEKLMLEGANLRDPARIDIRGEVSVGMDVMIDVNVIMQGKVTIGNNVTIGAGAILIDCEISDNAEIKPYSIVESAKVGAEASAGPFARLRPGAELKRDAHIGNFVEMKKAVLGEGSKAGHLAYIGDAQIGSGVNIGAGTITCNYDGANKHLTVIEDNVFVGSDTQLVAPVTIGKGATLGAGSTITKDVAADELVITRVKQRHLTGWPRPVKLKK.

Residues 1–226 are pyrophosphorylase; sequence MALNVVILAA…AIEVEGANNR (226 aa). UDP-N-acetyl-alpha-D-glucosamine-binding positions include 8–11, K22, Q73, 78–79, 100–102, G137, E151, N166, and N224; these read LAAG, GT, and YGD. D102 contacts Mg(2+). N224 contacts Mg(2+). Residues 227-247 are linker; the sequence is VQLAQLERAYQARAAEKLMLE. The tract at residues 248 to 454 is N-acetyltransferase; that stretch reads GANLRDPARI…GWPRPVKLKK (207 aa). UDP-N-acetyl-alpha-D-glucosamine is bound by residues R330 and K348. H360 functions as the Proton acceptor in the catalytic mechanism. Residues Y363 and N374 each contribute to the UDP-N-acetyl-alpha-D-glucosamine site. Acetyl-CoA-binding positions include A377, 383–384, S402, A420, and R437; that span reads NY.

This sequence in the N-terminal section; belongs to the N-acetylglucosamine-1-phosphate uridyltransferase family. It in the C-terminal section; belongs to the transferase hexapeptide repeat family. As to quaternary structure, homotrimer. Mg(2+) serves as cofactor.

It is found in the cytoplasm. The catalysed reaction is alpha-D-glucosamine 1-phosphate + acetyl-CoA = N-acetyl-alpha-D-glucosamine 1-phosphate + CoA + H(+). It catalyses the reaction N-acetyl-alpha-D-glucosamine 1-phosphate + UTP + H(+) = UDP-N-acetyl-alpha-D-glucosamine + diphosphate. It functions in the pathway nucleotide-sugar biosynthesis; UDP-N-acetyl-alpha-D-glucosamine biosynthesis; N-acetyl-alpha-D-glucosamine 1-phosphate from alpha-D-glucosamine 6-phosphate (route II): step 2/2. The protein operates within nucleotide-sugar biosynthesis; UDP-N-acetyl-alpha-D-glucosamine biosynthesis; UDP-N-acetyl-alpha-D-glucosamine from N-acetyl-alpha-D-glucosamine 1-phosphate: step 1/1. Its pathway is bacterial outer membrane biogenesis; LPS lipid A biosynthesis. Functionally, catalyzes the last two sequential reactions in the de novo biosynthetic pathway for UDP-N-acetylglucosamine (UDP-GlcNAc). The C-terminal domain catalyzes the transfer of acetyl group from acetyl coenzyme A to glucosamine-1-phosphate (GlcN-1-P) to produce N-acetylglucosamine-1-phosphate (GlcNAc-1-P), which is converted into UDP-GlcNAc by the transfer of uridine 5-monophosphate (from uridine 5-triphosphate), a reaction catalyzed by the N-terminal domain. This Shewanella woodyi (strain ATCC 51908 / MS32) protein is Bifunctional protein GlmU.